The primary structure comprises 291 residues: Gamma-sarcoglycan (291 aa).

The Cytoplasmic segment spans residues 1-37; the sequence is MVREQYTTVTEGTHIERPENQHIYKIGIYGWRKRCLY. A helical; Signal-anchor for type II membrane protein transmembrane segment spans residues 38-58; that stretch reads LFVLLLLAILVVNLALTIWIL. The Extracellular portion of the chain corresponds to 59–291; it reads KVMWFSPIGM…TCEEHSHVCL (233 aa). An N-linked (GlcNAc...) asparagine glycan is attached at asparagine 110. 2 cysteine pairs are disulfide-bonded: cysteine 265–cysteine 290 and cysteine 267–cysteine 283.

Belongs to the sarcoglycan beta/delta/gamma/zeta family. Interacts with the syntrophin SNTA1 and FLNC. Cross-link to form 2 major subcomplexes: one consisting of SGCB, SGCD and SGCG and the other consisting of SGCB and SGCD. The association between SGCB and SGCG is particularly strong while SGCA is loosely associated with the other sarcoglycans. Most strongly expressed in skeletal and heart muscle. Also detected in proliferating myoblasts.

The protein localises to the cell membrane. It localises to the sarcolemma. Its subcellular location is the cytoplasm. It is found in the cytoskeleton. In terms of biological role, component of the sarcoglycan complex, a subcomplex of the dystrophin-glycoprotein complex which forms a link between the F-actin cytoskeleton and the extracellular matrix. This chain is Gamma-sarcoglycan (Sgcg), found in Mus musculus (Mouse).